The primary structure comprises 220 residues: MKTGIVTTLIALCLPVSVFATTLRLSTDVDLLVLDGKKVSSSLLRGADSIELDNGPHQLVFRVEKTIHLSNSEERLYISPPLVVSFNTQLINQVNFRLPRLENEREANHFDAAPHLELLDGDATPIPVKLDILAITSTAKTIDYEVEVERYNKSAKRASLPQFATMMADDSTLLSGVSELDAIPPQSQVLTEQRLKYWFKLADPQTRNTFLQWAEKQPSS.

An N-terminal signal peptide occupies residues 1 to 20; the sequence is MKTGIVTTLIALCLPVSVFA.

The protein belongs to the UPF0319 family.

This chain is UPF0319 protein YccT, found in Escherichia coli (strain 55989 / EAEC).